A 309-amino-acid chain; its full sequence is Taste receptor type 2 member 124 (309 aa).

The Extracellular portion of the chain corresponds to 1 to 7 (MVPVLHS). Residues 8 to 28 (LSTIILIAEFVWGNLSNGLIV) traverse the membrane as a helical segment. Residues 29–46 (LKNCIDWINKKELSTVDQ) lie on the Cytoplasmic side of the membrane. Residues 47–67 (ILIVLAISRISLIWETLIIWV) form a helical membrane-spanning segment. At 68 to 86 (KDQLISSITIEELKIIVFS) the chain is on the extracellular side. The helical transmembrane segment at 87-107 (FILSSHFSLWLATALSIFYLF) threads the bilayer. Over 108–127 (RIPNCYWQIFLYLKWRIKQL) the chain is Cytoplasmic. Residues 128–148 (IVHMLLGSLVFLVANMIQITI) traverse the membrane as a helical segment. Over 149 to 183 (TLEERFYQYGGNTSVNSMETEFSILIELMLFNMTM) the chain is Extracellular. Residues asparagine 160 and asparagine 180 are each glycosylated (N-linked (GlcNAc...) asparagine). A helical membrane pass occupies residues 184–204 (FSIIPFSLALISFLLLIFSLW). The Cytoplasmic segment spans residues 205 to 230 (KHLQKMPLNSRGDRDPSATAHRNALR). The helical transmembrane segment at 231 to 251 (ILVSFLLLYTIYFLSLLISWV) threads the bilayer. Over 252–261 (AQKNQSELVH) the chain is Extracellular. Residue asparagine 255 is glycosylated (N-linked (GlcNAc...) asparagine). The chain crosses the membrane as a helical span at residues 262–282 (IICMITSLVYPSFHSYILILG). At 283–309 (NYKLKQTSLWVMRQLGCRMKRQNTPTT) the chain is on the cytoplasmic side.

It belongs to the G-protein coupled receptor T2R family.

The protein resides in the membrane. Functionally, putative taste receptor which may play a role in the perception of bitterness. This chain is Taste receptor type 2 member 124, found in Mus musculus (Mouse).